We begin with the raw amino-acid sequence, 873 residues long: Protein SEY1 (873 aa).

The Cytoplasmic segment spans residues 1–750; the sequence is MVANGHFFAG…KRSAIGGITQ (750 aa). Residues 50–308 form the GB1/RHD3-type G domain; that stretch reads GFNYHLISVF…IPADGFAVYA (259 aa). Position 60 to 67 (60 to 67) interacts with GTP; the sequence is GSQSTGKS. Positions 677 to 701 are disordered; the sequence is LDKWIGHTPSSATPADEEDLTPIGG. Residues 691–701 show a composition bias toward acidic residues; the sequence is ADEEDLTPIGG. A helical transmembrane segment spans residues 751-771; it reads VPLYFYGLLLALGWNEIVAVL. At 772–774 the chain is on the lumenal side; that stretch reads RNP. The helical transmembrane segment at 775–795 threads the bilayer; the sequence is AYFLLLFVCAVTAYVTYQLNL. Residues 796–873 are Cytoplasmic-facing; the sequence is WGPIIKMTEA…IDDADDDDDF (78 aa). Residues 841-873 form a disordered region; sequence EGYDMSNMKNRKSAGGYQNNRSHIDDADDDDDF.

It belongs to the TRAFAC class dynamin-like GTPase superfamily. GB1/RHD3 GTPase family. RHD3 subfamily.

Its subcellular location is the endoplasmic reticulum membrane. In terms of biological role, cooperates with the reticulon proteins and tubule-shaping DP1 family proteins to generate and maintain the structure of the tubular endoplasmic reticulum network. Has GTPase activity, which is required for its function in ER organization. The chain is Protein SEY1 from Paracoccidioides lutzii (strain ATCC MYA-826 / Pb01) (Paracoccidioides brasiliensis).